The chain runs to 85 residues: Sec-independent protein translocase protein TatA (85 aa).

Residues 1–21 traverse the membrane as a helical segment; the sequence is MGGISIWQLLIIALIVVLLFG. The segment at 43 to 85 is disordered; the sequence is MSSDEDKKALEDAEAAKSVQTAQTAQPTQQATEKKPESNKEQA. Residues 46 to 57 show a composition bias toward basic and acidic residues; sequence DEDKKALEDAEA. The span at 58–73 shows a compositional bias: low complexity; the sequence is AKSVQTAQTAQPTQQA. Basic and acidic residues predominate over residues 74-85; the sequence is TEKKPESNKEQA.

It belongs to the TatA/E family. In terms of assembly, the Tat system comprises two distinct complexes: a TatABC complex, containing multiple copies of TatA, TatB and TatC subunits, and a separate TatA complex, containing only TatA subunits. Substrates initially bind to the TatABC complex, which probably triggers association of the separate TatA complex to form the active translocon.

Its subcellular location is the cell inner membrane. Functionally, part of the twin-arginine translocation (Tat) system that transports large folded proteins containing a characteristic twin-arginine motif in their signal peptide across membranes. TatA could form the protein-conducting channel of the Tat system. The polypeptide is Sec-independent protein translocase protein TatA (Shewanella sp. (strain ANA-3)).